We begin with the raw amino-acid sequence, 132 residues long: Small ribosomal subunit protein uS8 (132 aa).

Belongs to the universal ribosomal protein uS8 family. In terms of assembly, part of the 30S ribosomal subunit. Contacts proteins S5 and S12.

One of the primary rRNA binding proteins, it binds directly to 16S rRNA central domain where it helps coordinate assembly of the platform of the 30S subunit. This is Small ribosomal subunit protein uS8 from Streptococcus thermophilus (strain CNRZ 1066).